Consider the following 682-residue polypeptide: DNA ligase (682 aa).

NAD(+) contacts are provided by residues 42 to 46 (DAEYD), 91 to 92 (SL), and E124. The active-site N6-AMP-lysine intermediate is K126. NAD(+) is bound by residues R147, E184, K302, and K326. Positions 420, 423, 438, and 444 each coordinate Zn(2+). The region spanning 603–682 (IADNPLKGKS…QEFIALTGEN (80 aa)) is the BRCT domain.

Belongs to the NAD-dependent DNA ligase family. LigA subfamily. Mg(2+) serves as cofactor. It depends on Mn(2+) as a cofactor.

The catalysed reaction is NAD(+) + (deoxyribonucleotide)n-3'-hydroxyl + 5'-phospho-(deoxyribonucleotide)m = (deoxyribonucleotide)n+m + AMP + beta-nicotinamide D-nucleotide.. Functionally, DNA ligase that catalyzes the formation of phosphodiester linkages between 5'-phosphoryl and 3'-hydroxyl groups in double-stranded DNA using NAD as a coenzyme and as the energy source for the reaction. It is essential for DNA replication and repair of damaged DNA. This Actinobacillus pleuropneumoniae serotype 3 (strain JL03) protein is DNA ligase.